The following is a 104-amino-acid chain: Large ribosomal subunit protein uL24 (104 aa).

The protein belongs to the universal ribosomal protein uL24 family. Part of the 50S ribosomal subunit.

Functionally, one of two assembly initiator proteins, it binds directly to the 5'-end of the 23S rRNA, where it nucleates assembly of the 50S subunit. One of the proteins that surrounds the polypeptide exit tunnel on the outside of the subunit. This chain is Large ribosomal subunit protein uL24, found in Shewanella piezotolerans (strain WP3 / JCM 13877).